Here is a 363-residue protein sequence, read N- to C-terminus: Probable dual-specificity RNA methyltransferase RlmN (363 aa).

Glutamate 106 serves as the catalytic Proton acceptor. The Radical SAM core domain maps to 112-345 (HEYGNSVCVT…VTIRREQGHD (234 aa)). The cysteines at positions 119 and 350 are disulfide-linked. [4Fe-4S] cluster-binding residues include cysteine 126, cysteine 130, and cysteine 133. Residues 176–177 (GE), serine 208, 231–233 (SLH), and asparagine 307 contribute to the S-adenosyl-L-methionine site. Catalysis depends on cysteine 350, which acts as the S-methylcysteine intermediate.

The protein belongs to the radical SAM superfamily. RlmN family. Requires [4Fe-4S] cluster as cofactor.

The protein localises to the cytoplasm. It carries out the reaction adenosine(2503) in 23S rRNA + 2 reduced [2Fe-2S]-[ferredoxin] + 2 S-adenosyl-L-methionine = 2-methyladenosine(2503) in 23S rRNA + 5'-deoxyadenosine + L-methionine + 2 oxidized [2Fe-2S]-[ferredoxin] + S-adenosyl-L-homocysteine. The enzyme catalyses adenosine(37) in tRNA + 2 reduced [2Fe-2S]-[ferredoxin] + 2 S-adenosyl-L-methionine = 2-methyladenosine(37) in tRNA + 5'-deoxyadenosine + L-methionine + 2 oxidized [2Fe-2S]-[ferredoxin] + S-adenosyl-L-homocysteine. Specifically methylates position 2 of adenine 2503 in 23S rRNA and position 2 of adenine 37 in tRNAs. This is Probable dual-specificity RNA methyltransferase RlmN from Bacillus velezensis (strain DSM 23117 / BGSC 10A6 / LMG 26770 / FZB42) (Bacillus amyloliquefaciens subsp. plantarum).